The sequence spans 359 residues: 4-hydroxy-tetrahydrodipicolinate synthase, chloroplastic (359 aa).

The N-terminal 33 residues, 1–33 (MSSSIIGRCHFVADSIEAAGTKRRTTRWRSPRA), are a transit peptide targeting the chloroplast. Thr102 lines the pyruvate pocket. Tyr188 serves as the catalytic Proton donor/acceptor. Lys216 (schiff-base intermediate with substrate) is an active-site residue. Ile255 lines the pyruvate pocket.

Belongs to the DapA family.

It localises to the plastid. It is found in the chloroplast. The enzyme catalyses L-aspartate 4-semialdehyde + pyruvate = (2S,4S)-4-hydroxy-2,3,4,5-tetrahydrodipicolinate + H2O + H(+). It functions in the pathway amino-acid biosynthesis; L-lysine biosynthesis via DAP pathway; (S)-tetrahydrodipicolinate from L-aspartate: step 3/4. Its function is as follows. Catalyzes the condensation of (S)-aspartate-beta-semialdehyde [(S)-ASA] and pyruvate to 4-hydroxy-tetrahydrodipicolinate (HTPA). This is 4-hydroxy-tetrahydrodipicolinate synthase, chloroplastic (DHPS1) from Nicotiana tabacum (Common tobacco).